We begin with the raw amino-acid sequence, 380 residues long: Glucose-1-phosphate adenylyltransferase (380 aa).

Residues G164, 179 to 180 (EK), and S190 each bind alpha-D-glucose 1-phosphate.

Belongs to the bacterial/plant glucose-1-phosphate adenylyltransferase family. As to quaternary structure, homotetramer.

The catalysed reaction is alpha-D-glucose 1-phosphate + ATP + H(+) = ADP-alpha-D-glucose + diphosphate. Its pathway is glycan biosynthesis; glycogen biosynthesis. In terms of biological role, involved in the biosynthesis of ADP-glucose, a building block required for the elongation reactions to produce glycogen. Catalyzes the reaction between ATP and alpha-D-glucose 1-phosphate (G1P) to produce pyrophosphate and ADP-Glc. This Streptococcus pneumoniae (strain Hungary19A-6) protein is Glucose-1-phosphate adenylyltransferase.